Consider the following 177-residue polypeptide: Large ribosomal subunit protein uL6 (177 aa).

This sequence belongs to the universal ribosomal protein uL6 family. As to quaternary structure, part of the 50S ribosomal subunit.

Its function is as follows. This protein binds to the 23S rRNA, and is important in its secondary structure. It is located near the subunit interface in the base of the L7/L12 stalk, and near the tRNA binding site of the peptidyltransferase center. In Azoarcus sp. (strain BH72), this protein is Large ribosomal subunit protein uL6.